A 483-amino-acid polypeptide reads, in one-letter code: Glutamate--tRNA ligase (483 aa).

The 'HIGH' region motif lies at 9–19 (PSPTGYLHIGN). The 'KMSKS' region motif lies at 250-254 (KLSKR). Lys-253 contacts ATP.

This sequence belongs to the class-I aminoacyl-tRNA synthetase family. Glutamate--tRNA ligase type 1 subfamily. As to quaternary structure, monomer.

It localises to the cytoplasm. It catalyses the reaction tRNA(Glu) + L-glutamate + ATP = L-glutamyl-tRNA(Glu) + AMP + diphosphate. In terms of biological role, catalyzes the attachment of glutamate to tRNA(Glu) in a two-step reaction: glutamate is first activated by ATP to form Glu-AMP and then transferred to the acceptor end of tRNA(Glu). This Blochmanniella floridana protein is Glutamate--tRNA ligase.